We begin with the raw amino-acid sequence, 291 residues long: 4-hydroxy-tetrahydrodipicolinate synthase (291 aa).

Threonine 45 provides a ligand contact to pyruvate. The active-site Proton donor/acceptor is the tyrosine 133. Residue lysine 161 is the Schiff-base intermediate with substrate of the active site. Isoleucine 203 contributes to the pyruvate binding site.

This sequence belongs to the DapA family. In terms of assembly, homotetramer.

Its subcellular location is the cytoplasm. It carries out the reaction L-aspartate 4-semialdehyde + pyruvate = (2S,4S)-4-hydroxy-2,3,4,5-tetrahydrodipicolinate + H2O + H(+). Its pathway is amino-acid biosynthesis; L-lysine biosynthesis via DAP pathway; (S)-tetrahydrodipicolinate from L-aspartate: step 3/4. Its activity is regulated as follows. Is allosterically feedback inhibited by lysine; the N.meningitidis enzyme is significantly more sensitive to lysine than the E.coli enzyme. Shows substrate inhibition by (S)-ASA, with a Ki of 1.7 mM. Catalyzes the condensation of (S)-aspartate-beta-semialdehyde [(S)-ASA] and pyruvate to 4-hydroxy-tetrahydrodipicolinate (HTPA). The polypeptide is 4-hydroxy-tetrahydrodipicolinate synthase (Neisseria meningitidis serogroup B (strain ATCC BAA-335 / MC58)).